We begin with the raw amino-acid sequence, 375 residues long: Queuine tRNA-ribosyltransferase (375 aa).

Asp-90 acts as the Proton acceptor in catalysis. Substrate contacts are provided by residues 90–94 (DSGGF), Asp-144, Gln-190, and Gly-217. The segment at 248-254 (GIGTPHY) is RNA binding. Asp-267 (nucleophile) is an active-site residue. Positions 272 to 276 (TRIAR) are RNA binding; important for wobble base 34 recognition. Zn(2+) is bound by residues Cys-305, Cys-307, Cys-310, and His-336.

The protein belongs to the queuine tRNA-ribosyltransferase family. In terms of assembly, homodimer. Within each dimer, one monomer is responsible for RNA recognition and catalysis, while the other monomer binds to the replacement base PreQ1. Zn(2+) serves as cofactor.

It carries out the reaction 7-aminomethyl-7-carbaguanine + guanosine(34) in tRNA = 7-aminomethyl-7-carbaguanosine(34) in tRNA + guanine. The protein operates within tRNA modification; tRNA-queuosine biosynthesis. Catalyzes the base-exchange of a guanine (G) residue with the queuine precursor 7-aminomethyl-7-deazaguanine (PreQ1) at position 34 (anticodon wobble position) in tRNAs with GU(N) anticodons (tRNA-Asp, -Asn, -His and -Tyr). Catalysis occurs through a double-displacement mechanism. The nucleophile active site attacks the C1' of nucleotide 34 to detach the guanine base from the RNA, forming a covalent enzyme-RNA intermediate. The proton acceptor active site deprotonates the incoming PreQ1, allowing a nucleophilic attack on the C1' of the ribose to form the product. After dissociation, two additional enzymatic reactions on the tRNA convert PreQ1 to queuine (Q), resulting in the hypermodified nucleoside queuosine (7-(((4,5-cis-dihydroxy-2-cyclopenten-1-yl)amino)methyl)-7-deazaguanosine). This chain is Queuine tRNA-ribosyltransferase, found in Borrelia duttonii (strain Ly).